The sequence spans 156 residues: Large ribosomal subunit protein uL22 (156 aa).

It belongs to the universal ribosomal protein uL22 family. As to quaternary structure, part of the 50S ribosomal subunit.

Its function is as follows. This protein binds specifically to 23S rRNA. It makes multiple contacts with different domains of the 23S rRNA in the assembled 50S subunit and ribosome. Functionally, the globular domain of the protein is located near the polypeptide exit tunnel on the outside of the subunit, while an extended beta-hairpin is found that lines the wall of the exit tunnel in the center of the 70S ribosome. This Methanocaldococcus jannaschii (strain ATCC 43067 / DSM 2661 / JAL-1 / JCM 10045 / NBRC 100440) (Methanococcus jannaschii) protein is Large ribosomal subunit protein uL22.